Consider the following 438-residue polypeptide: Elongation factor 1-alpha (438 aa).

Residues 5–228 (KPHLNLVVIG…ALDSLEPPPK (224 aa)) enclose the tr-type G domain. Residues 14 to 21 (GHVDHGKS) are G1. GTP is bound at residue 14-21 (GHVDHGKS). S21 contributes to the Mg(2+) binding site. The segment at 70 to 74 (GVTIA) is G2. Residues 91–94 (DAPG) are G3. Residues 91 to 95 (DAPGH) and 153 to 156 (NKMD) contribute to the GTP site. The segment at 153-156 (NKMD) is G4. The segment at 194–196 (SAW) is G5.

It belongs to the TRAFAC class translation factor GTPase superfamily. Classic translation factor GTPase family. EF-Tu/EF-1A subfamily.

Its subcellular location is the cytoplasm. The catalysed reaction is GTP + H2O = GDP + phosphate + H(+). GTP hydrolase that promotes the GTP-dependent binding of aminoacyl-tRNA to the A-site of ribosomes during protein biosynthesis. In Staphylothermus marinus (strain ATCC 43588 / DSM 3639 / JCM 9404 / F1), this protein is Elongation factor 1-alpha.